We begin with the raw amino-acid sequence, 479 residues long: Aspartyl/glutamyl-tRNA(Asn/Gln) amidotransferase subunit B (479 aa).

Belongs to the GatB/GatE family. GatB subfamily. In terms of assembly, heterotrimer of A, B and C subunits.

The enzyme catalyses L-glutamyl-tRNA(Gln) + L-glutamine + ATP + H2O = L-glutaminyl-tRNA(Gln) + L-glutamate + ADP + phosphate + H(+). It carries out the reaction L-aspartyl-tRNA(Asn) + L-glutamine + ATP + H2O = L-asparaginyl-tRNA(Asn) + L-glutamate + ADP + phosphate + 2 H(+). Allows the formation of correctly charged Asn-tRNA(Asn) or Gln-tRNA(Gln) through the transamidation of misacylated Asp-tRNA(Asn) or Glu-tRNA(Gln) in organisms which lack either or both of asparaginyl-tRNA or glutaminyl-tRNA synthetases. The reaction takes place in the presence of glutamine and ATP through an activated phospho-Asp-tRNA(Asn) or phospho-Glu-tRNA(Gln). This chain is Aspartyl/glutamyl-tRNA(Asn/Gln) amidotransferase subunit B, found in Streptococcus pyogenes serotype M5 (strain Manfredo).